Here is a 1197-residue protein sequence, read N- to C-terminus: MEEKPKSTTPPPSVSSLRQKFEQFLDKTDKGFNATRNNYRGPVSSSTGIINDKEKKSHSYFKVREEGSNKRPSSFSASNPITPSSPQSTHSSPIYRGVGYHQYSSVNSGNSYSGSGNNINNIINNSNNSNSNNLYGNNSNNQSSGSLGNFLIDKLEYSAATVTASDLKRERQQLFRNKEEFTMESSSYGGSTIGDDDLDSLNGSSSQQFNHRNSSWADRRERFIKKVMNGQFNEVQMRDELNRLRDIEADKIRAEERRTPSMNMDEFKAIEIERLRKKIYQEELVIFRQEEIEKIQREERIKIEKEYDDKSIISSQERQHIVQQIINQKEDEKGSSPPFPIPLVVNNNNNENNENDNNNNNNNNNNNNNNNNNNNNNNNKNIDLTSFNNNININSNNNEIKNNVIVDSDDEEELERLEQLRRQREIERLREEEEENEDRVERELASRRRQEEDRIKREEEEEEEEQRNYLRRLKELERIKQIEEEEEEERERQSQLQSSQQQQKSSSTQRSSNTVTSTSSSSTGGDSNPSTSQKPTNLLNLMGSNNNISNINTNILSHSIVNSSGGLPPPPPTASHVDNRSRSHTLAGESHSSENTPLVSSIDNNGVNNKMSRSHSGGALSGLALPTAPPLPNQPNVNNSNNNNNNNNINNNHNHSHNHSNNLHQSALKNSSSMSTPSISPSQAGNSATSTVPSSPISASTSMSSPTLVVSPRKDELTTSTGSTRKGSISEREDKKKVSSSSTSSSSSSNGGLSSSGKDHKKDHSSEEKEKEKKSFFNKLFSKEKKDHHSSSKSPSSGSSGGGEVDEKKKKKLSPRVGTPFNVKHDVHVNFNADTGFEGLPKEWEVLIKSNFQEPEVMQHPEEVLDVVKFHAQYQGLASAPAMHAPSIPLTDEPPVTLNDLISLDDPKKIYYNINKIGEGGAGEVFEAINSRTNQTIAIKKMKLKAQNLKTVINEIGMMKNSNHENIVQYIDSYIVADELWVAMEFMSGGCLTEVLDQYRDIQLNESQIAFVCQEVLRGLEYIHKFNRIHRDIKSDNILIGANGEIKLADFGYAAQLTQIRQERNSVVGTPYWMAPELIRGNNYDFKVDVWSLGIMTREMAEGEPPYLEFPPLRALFLLTTQGLPPIRDAHKWSKEFNDFLALCLEKDTEKRASSSSLLHHPFLKRACSGPEFYKAVDAARIEKENQLQNFANLTAI.

5 disordered regions span residues 1–96 (MEEK…PIYR), 328–383 (QKED…KNID), 430–468 (REEEEENEDRVERELASRRRQEEDRIKREEEEEEEEQRN), 485–543 (EEEE…NLMG), and 562–819 (NSSG…RVGT). Positions 19–30 (QKFEQFLDKTDK) are enriched in basic and acidic residues. Residues 34-49 (ATRNNYRGPVSSSTGI) show a composition bias toward polar residues. Residues 51 to 69 (NDKEKKSHSYFKVREEGSN) are compositionally biased toward basic and acidic residues. A compositionally biased stretch (polar residues) spans 70–79 (KRPSSFSASN). Low complexity-rich tracts occupy residues 80 to 94 (PITPSSPQSTHSSPI) and 346 to 381 (NNNNNENNENDNNNNNNNNNNNNNNNNNNNNNNNKN). Over residues 439-458 (RVERELASRRRQEEDRIKRE) the composition is skewed to basic and acidic residues. The span at 494-523 (SQLQSSQQQQKSSSTQRSSNTVTSTSSSST) shows a compositional bias: low complexity. Residues 524–536 (GGDSNPSTSQKPT) show a composition bias toward polar residues. Threonine 585 carries the phosphothreonine; by PKB modification. The segment covering 593–615 (SENTPLVSSIDNNGVNNKMSRSH) has biased composition (polar residues). Composition is skewed to low complexity over residues 636-653 (NVNNSNNNNNNNNINNNH) and 671-707 (SSSMSTPSISPSQAGNSATSTVPSSPISASTSMSSPT). Residues 718 to 727 (TTSTGSTRKG) show a composition bias toward polar residues. Residues 728-737 (SISEREDKKK) show a composition bias toward basic and acidic residues. A compositionally biased stretch (low complexity) spans 739–756 (SSSSTSSSSSSNGGLSSS). Residues 757–790 (GKDHKKDHSSEEKEKEKKSFFNKLFSKEKKDHHS) are compositionally biased toward basic and acidic residues. The CRIB domain occupies 817–830 (VGTPFNVKHDVHVN). Positions 911-1164 (YYNINKIGEG…SSSLLHHPFL (254 aa)) constitute a Protein kinase domain. ATP is bound by residues 917–925 (IGEGGAGEV) and lysine 940. Aspartate 1032 acts as the Proton acceptor in catalysis.

It belongs to the protein kinase superfamily. STE Ser/Thr protein kinase family. STE20 subfamily. It depends on Mg(2+) as a cofactor. In terms of processing, phosphorylation on Thr-585 results in cAMP-mediated activation and localization to the cytoskeleton. Colocalizes with myosin II to the cleavage furrow of cells undergoing cytokinesis and the posterior cortex of polarized cells.

The protein resides in the cytoplasm. Its subcellular location is the cytosol. It localises to the cytoskeleton. The enzyme catalyses L-seryl-[protein] + ATP = O-phospho-L-seryl-[protein] + ADP + H(+). The catalysed reaction is L-threonyl-[protein] + ATP = O-phospho-L-threonyl-[protein] + ADP + H(+). Regulator of the myosin II component of the cytoskeleton: required for regulation of cytokinesis. Functions during chemotaxis, required for maintaining the direction of cell movement, suppressing lateral pseudopod extension, and proper retraction of the posterior of chemotaxing cells. In Dictyostelium discoideum (Social amoeba), this protein is Serine/threonine-protein kinase pakA (pakA).